The following is a 255-amino-acid chain: Type III pantothenate kinase (255 aa).

ATP is bound at residue 6-13 (DVGNTNIV). Residues Y100 and 107–110 (GADR) contribute to the substrate site. The active-site Proton acceptor is D109. Residue D129 coordinates K(+). T132 lines the ATP pocket. T184 provides a ligand contact to substrate.

The protein belongs to the type III pantothenate kinase family. As to quaternary structure, homodimer. The cofactor is NH4(+). K(+) is required as a cofactor.

The protein localises to the cytoplasm. The enzyme catalyses (R)-pantothenate + ATP = (R)-4'-phosphopantothenate + ADP + H(+). It participates in cofactor biosynthesis; coenzyme A biosynthesis; CoA from (R)-pantothenate: step 1/5. Its function is as follows. Catalyzes the phosphorylation of pantothenate (Pan), the first step in CoA biosynthesis. This Thermoanaerobacter sp. (strain X514) protein is Type III pantothenate kinase.